The following is a 470-amino-acid chain: ATP-dependent protease ATPase subunit HslU (470 aa).

Residues valine 22 and glycine 64–glutamate 69 contribute to the ATP site. The interval lysine 145 to arginine 187 is disordered. Positions 283, 348, and 420 each coordinate ATP.

The protein belongs to the ClpX chaperone family. HslU subfamily. In terms of assembly, a double ring-shaped homohexamer of HslV is capped on each side by a ring-shaped HslU homohexamer. The assembly of the HslU/HslV complex is dependent on binding of ATP.

Its subcellular location is the cytoplasm. Its function is as follows. ATPase subunit of a proteasome-like degradation complex; this subunit has chaperone activity. The binding of ATP and its subsequent hydrolysis by HslU are essential for unfolding of protein substrates subsequently hydrolyzed by HslV. HslU recognizes the N-terminal part of its protein substrates and unfolds these before they are guided to HslV for hydrolysis. The polypeptide is ATP-dependent protease ATPase subunit HslU (Staphylococcus saprophyticus subsp. saprophyticus (strain ATCC 15305 / DSM 20229 / NCIMB 8711 / NCTC 7292 / S-41)).